The following is a 103-amino-acid chain: Large ribosomal subunit protein bL21 (103 aa).

It belongs to the bacterial ribosomal protein bL21 family. Part of the 50S ribosomal subunit. Contacts protein L20.

In terms of biological role, this protein binds to 23S rRNA in the presence of protein L20. The polypeptide is Large ribosomal subunit protein bL21 (Variovorax paradoxus (strain S110)).